Reading from the N-terminus, the 253-residue chain is Homeobox protein EMX2 (253 aa).

The homeobox DNA-binding region spans 155-214 (PKRIRTAFSPSQLLRLEHAFEKNHYVVGAERKQLAHSLSLTETQVKVWFQNRRTKFKRQK). The disordered stretch occupies residues 213–253 (QKLEEEGSDSQQKKKGTHHINRWRIATKQASPEEIDVTSDD). Positions 225 to 234 (KKKGTHHINR) are enriched in basic residues.

The protein belongs to the EMX homeobox family. In terms of assembly, interacts with translation initiation factor EIF4E.

It localises to the nucleus. Its subcellular location is the cell projection. The protein localises to the axon. Functionally, transcription factor, which in cooperation with EMX1, acts to generate the boundary between the roof and archipallium in the developing brain. May function in combination with OTX1/2 to specify cell fates in the developing central nervous system. In the inner ear, it controls the distribution of GPR156 at hair cell boundaries, and regulates the organization of stereociliary bundles in opposite orientations across the line of polarity reversal (LPR). The chain is Homeobox protein EMX2 (EMX2) from Bos taurus (Bovine).